The following is a 253-amino-acid chain: Chitooligosaccharide deacetylase (253 aa).

The Mg(2+) site is built by H61 and H126.

It belongs to the YdjC deacetylase family. ChbG subfamily. In terms of assembly, homodimer. Mg(2+) is required as a cofactor.

It is found in the cytoplasm. The catalysed reaction is N,N'-diacetylchitobiose + H2O = N-acetyl-beta-D-glucosaminyl-(1-&gt;4)-D-glucosamine + acetate. It catalyses the reaction diacetylchitobiose-6'-phosphate + H2O = N'-monoacetylchitobiose-6'-phosphate + acetate. Its pathway is glycan degradation; chitin degradation. Its function is as follows. Involved in the degradation of chitin. ChbG is essential for growth on the acetylated chitooligosaccharides chitobiose and chitotriose but is dispensable for growth on cellobiose and chitosan dimer, the deacetylated form of chitobiose. Deacetylation of chitobiose-6-P and chitotriose-6-P is necessary for both the activation of the chb promoter by the regulatory protein ChbR and the hydrolysis of phosphorylated beta-glucosides by the phospho-beta-glucosidase ChbF. Catalyzes the removal of only one acetyl group from chitobiose-6-P to yield monoacetylchitobiose-6-P, the inducer of ChbR and the substrate of ChbF. The chain is Chitooligosaccharide deacetylase from Yersinia enterocolitica serotype O:8 / biotype 1B (strain NCTC 13174 / 8081).